A 144-amino-acid polypeptide reads, in one-letter code: Large ribosomal subunit protein uL15 (144 aa).

Residues 1-13 (MVRERTKKLRGGH) are compositionally biased toward basic residues. The tract at residues 1–32 (MVRERTKKLRGGHYGRGFKAGRGKGKKGGSGN) is disordered.

This sequence belongs to the universal ribosomal protein uL15 family. In terms of assembly, part of the 50S ribosomal subunit.

Functionally, binds to the 23S rRNA. The sequence is that of Large ribosomal subunit protein uL15 from Thermoplasma acidophilum (strain ATCC 25905 / DSM 1728 / JCM 9062 / NBRC 15155 / AMRC-C165).